A 239-amino-acid polypeptide reads, in one-letter code: Protein GrpE (239 aa).

2 disordered regions span residues 1–50 and 209–239; these read MIEN…INTE and MGHG…SEDV. A compositionally biased stretch (polar residues) spans 16–30; that stretch reads VLNQDNAPEDNSSAA. Acidic residues predominate over residues 218-239; the sequence is EEVEKDTVEEDIDSEENTSEDV.

It belongs to the GrpE family. Homodimer.

It localises to the cytoplasm. Its function is as follows. Participates actively in the response to hyperosmotic and heat shock by preventing the aggregation of stress-denatured proteins, in association with DnaK and GrpE. It is the nucleotide exchange factor for DnaK and may function as a thermosensor. Unfolded proteins bind initially to DnaJ; upon interaction with the DnaJ-bound protein, DnaK hydrolyzes its bound ATP, resulting in the formation of a stable complex. GrpE releases ADP from DnaK; ATP binding to DnaK triggers the release of the substrate protein, thus completing the reaction cycle. Several rounds of ATP-dependent interactions between DnaJ, DnaK and GrpE are required for fully efficient folding. In Prochlorococcus marinus (strain MIT 9312), this protein is Protein GrpE.